Here is a 343-residue protein sequence, read N- to C-terminus: Leucine-rich repeat-containing protein 39 (343 aa).

LRR repeat units follow at residues 64–87 (EEGR…LVQL), 88–110 (SQIQ…ISSF), 111–133 (QSLI…IGKL), 134–156 (TRLR…LGCC), 158–180 (NLEK…LSNL), 181–203 (KKLS…VVNL), 204–226 (PSLE…IHRM), 228–249 (KLHT…ISRM), 250–274 (KSLD…GMSN), and 275–295 (LRFV…PDLN).

The protein resides in the cytoplasm. Its subcellular location is the myofibril. The protein localises to the sarcomere. It localises to the m line. Component of the sarcomeric M-band which plays a role in myocyte response to biomechanical stress. May regulate expression of other M-band proteins via an SRF-dependent pathway. Important for normal contractile function in heart. The polypeptide is Leucine-rich repeat-containing protein 39 (Danio rerio (Zebrafish)).